The following is a 271-amino-acid chain: Dermonecrotic toxin LhSicTox-alphaIA2aiv (271 aa).

The active site involves His-3. Mg(2+) is bound by residues Glu-23 and Asp-25. The active-site Nucleophile is the His-39. 2 disulfide bridges follow: Cys-43–Cys-49 and Cys-45–Cys-188. Asp-83 lines the Mg(2+) pocket.

This sequence belongs to the arthropod phospholipase D family. Class II subfamily. Mg(2+) is required as a cofactor. As to expression, expressed by the venom gland.

The protein resides in the secreted. It catalyses the reaction an N-(acyl)-sphingosylphosphocholine = an N-(acyl)-sphingosyl-1,3-cyclic phosphate + choline. It carries out the reaction an N-(acyl)-sphingosylphosphoethanolamine = an N-(acyl)-sphingosyl-1,3-cyclic phosphate + ethanolamine. The enzyme catalyses a 1-acyl-sn-glycero-3-phosphocholine = a 1-acyl-sn-glycero-2,3-cyclic phosphate + choline. The catalysed reaction is a 1-acyl-sn-glycero-3-phosphoethanolamine = a 1-acyl-sn-glycero-2,3-cyclic phosphate + ethanolamine. Its function is as follows. Dermonecrotic toxins cleave the phosphodiester linkage between the phosphate and headgroup of certain phospholipids (sphingolipid and lysolipid substrates), forming an alcohol (often choline) and a cyclic phosphate. This toxin acts on sphingomyelin (SM). It may also act on ceramide phosphoethanolamine (CPE), lysophosphatidylcholine (LPC) and lysophosphatidylethanolamine (LPE), but not on lysophosphatidylserine (LPS), and lysophosphatidylglycerol (LPG). It acts by transphosphatidylation, releasing exclusively cyclic phosphate products as second products. Induces dermonecrosis, hemolysis, increased vascular permeability, edema, inflammatory response, and platelet aggregation. The polypeptide is Dermonecrotic toxin LhSicTox-alphaIA2aiv (Loxosceles hirsuta (Recluse spider)).